A 165-amino-acid polypeptide reads, in one-letter code: uncharacterized protein (165 aa).

Residues 1-25 form the signal peptide; it reads MKRVLFSVIVFTAVGFTFCQSKAHA.

This is an uncharacterized protein from Bacillus subtilis (strain 168).